We begin with the raw amino-acid sequence, 211 residues long: V-type ATP synthase subunit D (211 aa).

Belongs to the V-ATPase D subunit family.

Its function is as follows. Produces ATP from ADP in the presence of a proton gradient across the membrane. This chain is V-type ATP synthase subunit D, found in Fusobacterium nucleatum subsp. nucleatum (strain ATCC 25586 / DSM 15643 / BCRC 10681 / CIP 101130 / JCM 8532 / KCTC 2640 / LMG 13131 / VPI 4355).